The chain runs to 379 residues: MLDHPLNSLGFAKPPAATRVVVAMSGGVDSSVVAAELAAEGYDVVGVTLQLYDHGAALAKKGACCAGRDIHDARRVAETMGFPHYVLDYENTFREAVIDEFADAYLAGATPVPCIRCNERVKFKDLLQTAKDLDADCMATGHYIQRKMGPAGPELHCAADAARDQSYFLFSTTPEQLAFLRFPLGHLASKAETRALAARHGLPVADKPDSQDICFVPNGNYAEVIQKLRPGAADPGEIVDLSGRVLGEHRGVIHYTIGQRRGLGIGGLGDPLYVVRLDPERRQVIVGPKEALSTRIVPVREINWLGDAPLTSRSEWQVMAKVRSTRAPREAVIRPLSDTEAEVELIAPEDGVSPGQACVFYAPGDSRILGGGWIWRGAR.

ATP contacts are provided by residues 23 to 30 (AMSGGVDS) and Leu49. The active-site Nucleophile is Cys117. Cys117 and Cys214 are oxidised to a cystine. Gly141 contacts ATP. The interval 163–165 (RDQ) is interaction with tRNA. The active-site Cysteine persulfide intermediate is the Cys214.

The protein belongs to the MnmA/TRMU family.

It localises to the cytoplasm. The catalysed reaction is S-sulfanyl-L-cysteinyl-[protein] + uridine(34) in tRNA + AH2 + ATP = 2-thiouridine(34) in tRNA + L-cysteinyl-[protein] + A + AMP + diphosphate + H(+). Its function is as follows. Catalyzes the 2-thiolation of uridine at the wobble position (U34) of tRNA, leading to the formation of s(2)U34. This Cereibacter sphaeroides (strain ATCC 17029 / ATH 2.4.9) (Rhodobacter sphaeroides) protein is tRNA-specific 2-thiouridylase MnmA.